We begin with the raw amino-acid sequence, 716 residues long: tRNA(Met) cytidine acetyltransferase TmcA (716 aa).

Residues glutamine 192, 217–226 (GRGKSYVIGL), and arginine 364 contribute to the ATP site. One can recognise an N-acetyltransferase domain in the interval 401-567 (REVLARDREV…KNVALAKPLD (167 aa)). Residues 493 to 495 (IAV) and 500 to 506 (QRRGLGS) each bind acetyl-CoA.

Belongs to the RNA cytidine acetyltransferase family. TmcA subfamily.

The protein resides in the cytoplasm. It catalyses the reaction cytidine(34) in elongator tRNA(Met) + acetyl-CoA + ATP + H2O = N(4)-acetylcytidine(34) in elongator tRNA(Met) + ADP + phosphate + CoA + H(+). Catalyzes the formation of N(4)-acetylcytidine (ac(4)C) at the wobble position of tRNA(Met), by using acetyl-CoA as an acetyl donor and ATP (or GTP). This chain is tRNA(Met) cytidine acetyltransferase TmcA, found in Aeropyrum pernix (strain ATCC 700893 / DSM 11879 / JCM 9820 / NBRC 100138 / K1).